A 103-amino-acid chain; its full sequence is Pilin (103 aa).

An N-terminal signal peptide occupies residues 1–30 (MYRFACRTLMLAACILATGVAGLGVGAQSA). Positions 61 to 76 (HDDFHRDSDGPDHSRD) are enriched in basic and acidic residues. A disordered region spans residues 61 to 103 (HDDFHRDSDGPDHSRDYPGPILEGPVLDDPGAAPPPPAAGGGA). The span at 92–103 (AAPPPPAAGGGA) shows a compositional bias: pro residues.

Belongs to the mycobacterial pilin family. In terms of assembly, forms a homomer composed of subunits assembled in a large structure.

It localises to the fimbrium. In terms of biological role, structural subunit of pili, which are thin, flexible, coiled-coil, aggregative fibers. Mediates adhesion to the extracellular matrix, an event that would facilitate direct interaction with the host epithelium during infection in the lung or other tissues. This is Pilin (mtp) from Mycobacterium bovis (strain ATCC BAA-935 / AF2122/97).